Reading from the N-terminus, the 181-residue chain is MDDLTAQALKDFTARYCDAWHEEHKSWPLSEELYGVPSPCIISTTEDAVYWQPQPFTGEQNVNAVERAFDIVIQPTIHTFYTTQFAGDMHAQFGDIKLTLLQTWSEDDFRRVQENLIGHLVTQKRLKLPPTLFIATLEEELEVISVCNLSGEVCKETLGTRKRTHLAPNLAEFLNQLKPLL.

Belongs to the Syd family.

Its subcellular location is the cell inner membrane. Functionally, interacts with the SecY protein in vivo. May bind preferentially to an uncomplexed state of SecY, thus functioning either as a chelating agent for excess SecY in the cell or as a regulatory factor that negatively controls the translocase function. The protein is Protein Syd of Escherichia coli O157:H7.